A 100-amino-acid chain; its full sequence is Integration host factor subunit alpha (100 aa).

Belongs to the bacterial histone-like protein family. Heterodimer of an alpha and a beta chain.

Its function is as follows. This protein is one of the two subunits of integration host factor, a specific DNA-binding protein that functions in genetic recombination as well as in transcriptional and translational control. The chain is Integration host factor subunit alpha from Cereibacter sphaeroides (strain ATCC 17023 / DSM 158 / JCM 6121 / CCUG 31486 / LMG 2827 / NBRC 12203 / NCIMB 8253 / ATH 2.4.1.) (Rhodobacter sphaeroides).